A 1479-amino-acid polypeptide reads, in one-letter code: Peroxidasin homolog (1479 aa).

The N-terminal stretch at 1-26 (MAKRSRGPGRRCLLALVLFCAWGTLA) is a signal peptide. The region spanning 27-63 (VVAQKPGAGCPSRCLCFRTTVRCMHLLLEAVPAVAPQ) is the LRRNT domain. 2 disulfides stabilise this stretch: cysteine 36–cysteine 42 and cysteine 40–cysteine 49. LRR repeat units follow at residues 61–84 (APQT…AFRR), 85–108 (LRNL…AFED), 110–132 (ENLK…AFKG), 133–156 (LASL…SFQH), 157–180 (LPKL…TFNH), and 182–204 (ESMK…LWLA). Residues 192–244 (NTLHCDCEILWLADLLKTYAESGNAQAAAICEYPRRIQGRSVATITPEELNCE) form the LRRCT domain. 6 cysteine pairs are disulfide-bonded: cysteine 196–cysteine 243, cysteine 198–cysteine 222, cysteine 267–cysteine 317, cysteine 363–cysteine 412, cysteine 454–cysteine 502, and cysteine 546–cysteine 594. Ig-like C2-type domains follow at residues 246–332 (PRIT…QEVT), 342–428 (PTFV…AFII), 433–520 (PQFT…LTVQ), and 521–610 (PRVT…MVLS). Residues asparagine 640, asparagine 699, asparagine 719, and asparagine 731 are each glycosylated (N-linked (GlcNAc...) asparagine). 4 cysteine pairs are disulfide-bonded: cysteine 723–cysteine 885, cysteine 732–cysteine 748, cysteine 847–cysteine 857, and cysteine 851–cysteine 875. Aspartate 826 is a binding site for heme b. The active-site Proton acceptor is histidine 827. A Ca(2+)-binding site is contributed by aspartate 828. Asparagine 865 is a glycosylation site (N-linked (GlcNAc...) asparagine). Residues threonine 907, tyrosine 909, aspartate 911, and serine 913 each coordinate Ca(2+). Cysteine 959 and cysteine 970 are joined by a disulfide. The N-linked (GlcNAc...) asparagine glycan is linked to asparagine 964. The heme b site is built by glutamate 980 and histidine 1074. One copy of the LRR 7 repeat lies at 1151–1175 (ALDLAAINIQRGRDHGIPPYHDYRV). Tyrosine 1176 bears the Phosphotyrosine mark. Cystine bridges form between cysteine 1177–cysteine 1234 and cysteine 1275–cysteine 1301. The N-linked (GlcNAc...) asparagine glycan is linked to asparagine 1178. Serine 1180 bears the Phosphoserine mark. An LRR 8 repeat occupies 1270–1291 (LARILCDNADNITRVQSDVFRV). Residues asparagine 1280, asparagine 1368, and asparagine 1425 are each glycosylated (N-linked (GlcNAc...) asparagine). The tract at residues 1315–1411 (CCEDCRTRGQ…QIKKLESRLS (97 aa)) is required in homotrimerization. Residues 1342-1380 (YQEDKPTKKTRPRKIPSVGRQGEHLSNSTSAFSTRSDAS) form a disordered region. Residues 1365 to 1380 (HLSNSTSAFSTRSDAS) are compositionally biased toward polar residues. The VWFC domain occupies 1413-1471 (TECVDAGGESHANNTKWKKDACTICECKDGQVTCFVEACPPATCAVPVNIPGACCPVCL).

It belongs to the peroxidase family. XPO subfamily. Homotrimer; disulfide-linked. The homotrimer form is predominant. Homooligomer; disulfide-linked. Oligomerization occurs intracellularly before C-terminal proteolytic cleavage. Interacts with PXDNL; this interaction inhibits the peroxidase activity of PXDN. It depends on Ca(2+) as a cofactor. The cofactor is heme b. Glycosylated. Four sites are completely N-glycosylated (Asn-640, Asn-731, Asn-865 and Asn-1425), whereas the others are found partially glycosylated. In terms of processing, processed by FURIN and the proteolytic processing largely depends on the peroxidase activity of PXDN. The proteolytic cleavage occurs after intracellular homotrimerization and releases into the extracellular matrix a large, catalytically active fragment and a smaller fragment consisting primarily of the C-terminal VWFC domain. The processing enhances both peroxidase activity and sulfilimine cross-links formation. As to expression, expressed at higher levels in heart, lung, ovary, spleen, intestine and placenta, and at lower levels in liver, colon, pancreas, kidney, thymus, skeletal muscle and prostate. Expressed in tumors such as melanoma, breast cancer, ovarian cancer and glioblastoma. A shorter form probably lacking the signal sequence is found in testis and in EB1 cells undergoing p53/TP53-dependent apoptosis.

The protein resides in the secreted. It is found in the extracellular space. It localises to the extracellular matrix. The protein localises to the endoplasmic reticulum. Its subcellular location is the cell surface. The protein resides in the basement membrane. It carries out the reaction L-lysyl-[collagen] + L-methionyl-[collagen] + H2O2 = [collagen]-L-lysyl-N-S-L-methionyl-[collagen] + 2 H2O + H(+). The catalysed reaction is bromide + H2O2 = hypobromite + H2O. The enzyme catalyses L-lysyl-[collagen] + L-methionyl-[collagen] + hypobromite = [collagen]-L-lysyl-N-S-L-methionyl-[collagen] + bromide + H2O + H(+). It catalyses the reaction L-tyrosyl-[protein] + bromide + H2O2 + H(+) = 3-bromo-L-tyrosyl-[protein] + 2 H2O. It carries out the reaction hypobromite + L-tyrosyl-[protein] + H(+) = 3-bromo-L-tyrosyl-[protein] + H2O. Its activity is regulated as follows. The hypobromous acid formation is activated by increasing nitrite concentrations and inhibited by increasing urate concentrations. Functionally, catalyzes the two-electron oxidation of bromide by hydrogen peroxide and generates hypobromite as a reactive intermediate which mediates the formation of sulfilimine cross-links between methionine and hydroxylysine residues within an uncross-linked collagen IV/COL4A1 NC1 hexamer. In turns, directly contributes to the collagen IV network-dependent fibronectin/FN and laminin assembly, which is required for full extracellular matrix (ECM)-mediated signaling. Thus, sulfilimine cross-links are essential for growth factor-induced cell proliferation and survival in endothelial cells, an event essential to basement membrane integrity. In addition, through the bromide oxidation, may promote tubulogenesis and induce angiogenesis through ERK1/2, Akt, and FAK pathways. Moreover brominates alpha2 collagen IV chain/COL4A2 at 'Tyr-1485' and leads to bromine enrichment of the basement membranes. In vitro, can also catalyze the two-electron oxidation of thiocyanate and iodide and these two substrates could effectively compete with bromide and thus inhibit the formation of sulfilimine bonds. Binds laminins. May play a role in the organization of eyeball structure and lens development during eye development. This Homo sapiens (Human) protein is Peroxidasin homolog.